The primary structure comprises 190 residues: 3-isopropylmalate dehydratase small subunit (190 aa).

This sequence belongs to the LeuD family. LeuD type 1 subfamily. In terms of assembly, heterodimer of LeuC and LeuD.

The enzyme catalyses (2R,3S)-3-isopropylmalate = (2S)-2-isopropylmalate. Its pathway is amino-acid biosynthesis; L-leucine biosynthesis; L-leucine from 3-methyl-2-oxobutanoate: step 2/4. In terms of biological role, catalyzes the isomerization between 2-isopropylmalate and 3-isopropylmalate, via the formation of 2-isopropylmaleate. This chain is 3-isopropylmalate dehydratase small subunit, found in Staphylococcus aureus (strain JH1).